Here is a 482-residue protein sequence, read N- to C-terminus: Malvidin galactosylase UGT88C3 (482 aa).

Catalysis depends on His16, which acts as the Proton acceptor. Asp117 acts as the Charge relay in catalysis. UDP contacts are provided by Ser279, Trp345, Ala349, His366, Asn370, Ser371, and Glu374.

This sequence belongs to the UDP-glycosyltransferase family. In terms of tissue distribution, highly expressed in leaves, sheaths, pistils and embryos, observed in stems, stem nodes and panicles, and present at low levels in roots.

It localises to the endoplasmic reticulum. The protein localises to the nucleus. It catalyses the reaction malvidin + UDP-alpha-D-galactose = malvidin 3-O-beta-D-galactoside + UDP + H(+). The protein operates within pigment biosynthesis; anthocyanin biosynthesis. Functionally, UDP-glycosyltransferase which uses UDP-galactose and malvidin as substrates to catalyze the biosynthesis of malvidin 3-O-galactoside, an anthocyanin conferring purple pigmentation. The chain is Malvidin galactosylase UGT88C3 from Oryza sativa subsp. japonica (Rice).